The chain runs to 236 residues: C-&gt;U-editing enzyme APOBEC-1 (236 aa).

The CMP/dCMP-type deaminase domain occupies 10 to 134 (GDPTLRRRIE…QQNRQGLRDL (125 aa)). Histidine 61 serves as a coordination point for Zn(2+). Glutamate 63 serves as the catalytic Proton donor. Zn(2+)-binding residues include cysteine 93 and cysteine 96.

This sequence belongs to the cytidine and deoxycytidylate deaminase family. In terms of assembly, homodimer. Interacts with A1CF; form an mRNA editing complex. Interacts with RBM47; form an mRNA editing complex. Found in a complex with CELF2/CUGBP2 and A1CF. Interacts with HNRPAB. Interacts with SYNCRIP. Requires Zn(2+) as cofactor. Expressed exclusively in the small intestine.

It is found in the cytoplasm. It localises to the nucleus. It catalyses the reaction a cytidine in mRNA + H2O + H(+) = a uridine in mRNA + NH4(+). The enzyme catalyses cytidine(6666) in apoB mRNA + H2O + H(+) = uridine(6666) in apoB mRNA + NH4(+). Cytidine deaminase catalyzing the cytidine to uridine postranscriptional editing of a variety of mRNAs. Form complexes with cofactors that confer differential editing activity and selectivity. Responsible for the postranscriptional editing of a CAA codon for Gln to a UAA codon for stop in the apolipoprotein B mRNA. Also involved in CGA (Arg) to UGA (Stop) editing in the NF1 mRNA. May also play a role in the epigenetic regulation of gene expression by participating in DNA demethylation. The protein is C-&gt;U-editing enzyme APOBEC-1 of Homo sapiens (Human).